The following is a 184-amino-acid chain: FMRFamide-like neuropeptides 3 (184 aa).

The signal sequence occupies residues 1–23 (MISPNHLILLFCVNCAFLVASDA). A propeptide spanning residues 24–25 (TP) is cleaved from the precursor. Phenylalanine 35 is subject to Phenylalanine amide. A propeptide spanning residues 39–73 (AIADEMTFEEDGYYPSNVMWKRSTVDSSEPVIRDQ) is cleaved from the precursor. 4 positions are modified to phenylalanine amide: phenylalanine 82, phenylalanine 95, phenylalanine 111, and phenylalanine 126. The disordered stretch occupies residues 90-110 (FGTMRFGKRNPENDTPFGTMR). Residues 130-142 (EDGNAPFGTMKFG) constitute a propeptide that is removed on maturation. The tract at residues 150 to 184 (LGTMRFGKRSADDSAPFGTMRFGKRNPLGTMRFGK) is disordered. Phenylalanine amide is present on residues phenylalanine 155, phenylalanine 171, and phenylalanine 182.

It belongs to the FARP (FMRFamide related peptide) family. Each flp gene is expressed in a distinct set of neurons. Flp-3 is expressed in the IL1 and PQR neurons.

It is found in the secreted. FMRFamides and FMRFamide-like peptides are neuropeptides. SAEPFGTMRF-amide inhibits the activity of dissected pharyngeal myogenic muscle system. In Caenorhabditis elegans, this protein is FMRFamide-like neuropeptides 3.